Here is a 332-residue protein sequence, read N- to C-terminus: Palmitoyltransferase ZDHHC15B (332 aa).

Residues 1 to 14 (MALSRALRCCQRIF) lie on the Cytoplasmic side of the membrane. A helical transmembrane segment spans residues 15–35 (SWIPVIIISSVVLWSYYAYVF). Topologically, residues 36 to 50 (ELCFVTLSNNLERVT) are lumenal. Residues 51 to 71 (YLLIFHVCFIMFCWTYWKAIF) traverse the membrane as a helical segment. At 72–166 (TPPSTPTKKF…NNCVGFSNYK (95 aa)) the chain is on the cytoplasmic side. The DHHC domain occupies 123–173 (RFCDRCQVIKPDRCHHCSVCETCVLKMDHHCPWVNNCVGFSNYKFFLLFLS). Positions 125 and 128 each coordinate Zn(2+). K132 contributes to the substrate binding site. 5 residues coordinate Zn(2+): H138, C139, C142, C145, and H152. C153 serves as the catalytic S-palmitoyl cysteine intermediate. C159 contacts Zn(2+). Residues 167–187 (FFLLFLSYSMIYCVFIASTVF) traverse the membrane as a helical segment. The Lumenal portion of the chain corresponds to 188-204 (QYFLKFWVGDLPNGPAK). A helical membrane pass occupies residues 205–228 (FHVLFLLFVALMFFVSLMFLFGYH). Over 229-332 (CWLVAKNRST…GSSLLIRTES (104 aa)) the chain is Cytoplasmic. Residues 305-332 (EEKWVEDGGSDEESADENGSSLLIRTES) form a disordered region.

The protein belongs to the DHHC palmitoyltransferase family. In terms of processing, autopalmitoylated (in vitro).

The protein resides in the golgi apparatus membrane. It localises to the postsynaptic density. The catalysed reaction is L-cysteinyl-[protein] + hexadecanoyl-CoA = S-hexadecanoyl-L-cysteinyl-[protein] + CoA. It catalyses the reaction L-cysteinyl-[protein] + tetradecanoyl-CoA = S-tetradecanoyl-L-cysteinyl-[protein] + CoA. The enzyme catalyses L-cysteinyl-[protein] + octadecanoyl-CoA = S-octadecanoyl-L-cysteinyl-[protein] + CoA. Palmitoyltransferase that catalyzes the addition of palmitate onto various protein substrates. Has no stringent fatty acid selectivity and in addition to palmitate can also transfer onto target proteins myristate from tetradecanoyl-CoA and stearate from octadecanoyl-CoA. May thereby regulate target proteins association and localization to membranes. In the nervous system, probably catalyzes the palmitoylation of synaptic proteins and is involved in the differentiation of dopaminergic neurons and the development of the diencephalon. The protein is Palmitoyltransferase ZDHHC15B (zdhhc15b) of Danio rerio (Zebrafish).